The following is a 198-amino-acid chain: Putative manganese efflux pump MntP (198 aa).

A run of 6 helical transmembrane segments spans residues 3–23 (SIELLIIAVGLSMDAFAVAIC), 37–57 (VLTGCFFGGFQALMPLLGYLL), 65–85 (ITSIDHWIAFGLLSLIGINMI), 105–127 (SLTVMAFATSIDALAIGVTFAFL), 131–153 (IIPAVTMIGITTFTFSFLGVKIG), and 171–191 (ILIGMGCKILFDHLGVISFVF).

It belongs to the MntP (TC 9.B.29) family.

The protein resides in the cell membrane. In terms of biological role, probably functions as a manganese efflux pump. In Acetivibrio thermocellus (strain ATCC 27405 / DSM 1237 / JCM 9322 / NBRC 103400 / NCIMB 10682 / NRRL B-4536 / VPI 7372) (Clostridium thermocellum), this protein is Putative manganese efflux pump MntP.